The following is a 288-amino-acid chain: uncharacterized protein (288 aa).

Residues Met1–Gly12 are compositionally biased toward basic and acidic residues. The interval Met1 to Asp20 is disordered.

It belongs to the class IV-like SAM-binding methyltransferase superfamily. RNA methyltransferase TrmH family.

This is an uncharacterized protein from Mycobacterium tuberculosis (strain ATCC 25618 / H37Rv).